Here is a 366-residue protein sequence, read N- to C-terminus: Tetraacyldisaccharide 4'-kinase (366 aa).

62 to 69 (RVGGTGKT) contacts ATP.

The protein belongs to the LpxK family.

The catalysed reaction is a lipid A disaccharide + ATP = a lipid IVA + ADP + H(+). It functions in the pathway glycolipid biosynthesis; lipid IV(A) biosynthesis; lipid IV(A) from (3R)-3-hydroxytetradecanoyl-[acyl-carrier-protein] and UDP-N-acetyl-alpha-D-glucosamine: step 6/6. Its function is as follows. Transfers the gamma-phosphate of ATP to the 4'-position of a tetraacyldisaccharide 1-phosphate intermediate (termed DS-1-P) to form tetraacyldisaccharide 1,4'-bis-phosphate (lipid IVA). The protein is Tetraacyldisaccharide 4'-kinase of Polynucleobacter necessarius subsp. necessarius (strain STIR1).